Consider the following 612-residue polypeptide: Actin-binding LIM protein 2 (612 aa).

4 LIM zinc-binding domains span residues 22–81 (ILCN…LYGT), 81–141 (TRCF…TLVG), 151–210 (RSCG…KFGI), and 210–270 (IRCD…ARTE). Residues C83, C86, H103, C106, C109, C112, C131, and C134 each contribute to the Zn(2+) site. Residues C212, C215, H232, C235, C238, C241, H260, and C263 each contribute to the Zn(2+) site. Residues 269–278 (TEDKSKETRT) are compositionally biased toward basic and acidic residues. 2 disordered regions span residues 269–295 (TEDK…SGSP) and 341–433 (AVGD…DNIY). 2 stretches are compositionally biased toward low complexity: residues 279–295 (SSES…SGSP) and 364–373 (SSPSSAGSVS). Phosphoserine occurs at positions 282, 294, 365, and 368. Residues 394–416 (SGRSTPSLSVHSDSRPPSSTYQQ) show a composition bias toward polar residues. Residue S453 is modified to Phosphoserine. The interval 471-520 (ADTRTNSPDLDSQSLSLSSGADQEPLQRMPGDSLYSRFPYSKPDTLPGPR) is disordered. At T473 the chain carries Phosphothreonine. 2 positions are modified to phosphoserine: S477 and S579. The segment covering 477–489 (SPDLDSQSLSLSS) has biased composition (low complexity). The 69-residue stretch at 544 to 612 (TREYKIYPYD…NDLKKKALLF (69 aa)) folds into the HP domain.

In terms of assembly, interacts with F-actin and ABRA.

The protein resides in the cytoplasm. In terms of biological role, may act as scaffold protein. May stimulate ABRA activity and ABRA-dependent SRF transcriptional activity. The sequence is that of Actin-binding LIM protein 2 (Ablim2) from Rattus norvegicus (Rat).